The chain runs to 205 residues: uncharacterized protein (205 aa).

Residues Met1–Lys63 are Cytoplasmic-facing. A helical membrane pass occupies residues Val64–Leu84. The Extracellular segment spans residues Glu85 to Ser124. The helical transmembrane segment at Leu125–Phe145 threads the bilayer. Residues Lys146–Val205 are Cytoplasmic-facing.

It localises to the membrane. This is an uncharacterized protein from Saccharomyces cerevisiae (strain ATCC 204508 / S288c) (Baker's yeast).